We begin with the raw amino-acid sequence, 252 residues long: MNIQLICETENPEKFTALCTQYGLVHDPESYLALVQTYDEQGQVRLELRKLDEAKLGAVFVDFVAGAMAHRRKFGGGRGEAVAKAVGIKSGYLPTVIDATAGLGRDAFVLASIGCRVRLVERHPVVRLLLQDGLQRAYADSEIGEMLQQNMQLLPVSHIAQLNPALDCVDVVYLDPMYPHKPKSALVKKEMRVFQHLVGADLDADNLLEPALALANKRVVVKRPDYAPFLAQQSPHFSRETKNHRFDIYLTG.

Residues 105-106 (RD), 121-122 (ER), and aspartate 175 contribute to the S-adenosyl-L-methionine site.

Belongs to the methyltransferase superfamily. RsmJ family.

The protein resides in the cytoplasm. It catalyses the reaction guanosine(1516) in 16S rRNA + S-adenosyl-L-methionine = N(2)-methylguanosine(1516) in 16S rRNA + S-adenosyl-L-homocysteine + H(+). Specifically methylates the guanosine in position 1516 of 16S rRNA. This is Ribosomal RNA small subunit methyltransferase J from Pasteurella multocida (strain Pm70).